The sequence spans 145 residues: 3-hydroxyacyl-[acyl-carrier-protein] dehydratase FabZ (145 aa).

Residue histidine 49 is part of the active site.

Belongs to the thioester dehydratase family. FabZ subfamily.

It localises to the cytoplasm. It catalyses the reaction a (3R)-hydroxyacyl-[ACP] = a (2E)-enoyl-[ACP] + H2O. In terms of biological role, involved in unsaturated fatty acids biosynthesis. Catalyzes the dehydration of short chain beta-hydroxyacyl-ACPs and long chain saturated and unsaturated beta-hydroxyacyl-ACPs. This is 3-hydroxyacyl-[acyl-carrier-protein] dehydratase FabZ from Rickettsia massiliae (strain Mtu5).